Here is a 178-residue protein sequence, read N- to C-terminus: Large ribosomal subunit protein bL25 (178 aa).

Belongs to the bacterial ribosomal protein bL25 family. CTC subfamily. Part of the 50S ribosomal subunit; part of the 5S rRNA/L5/L18/L25 subcomplex. Contacts the 5S rRNA. Binds to the 5S rRNA independently of L5 and L18.

This is one of the proteins that binds to the 5S RNA in the ribosome where it forms part of the central protuberance. This is Large ribosomal subunit protein bL25 from Campylobacter hominis (strain ATCC BAA-381 / DSM 21671 / CCUG 45161 / LMG 19568 / NCTC 13146 / CH001A).